Here is a 322-residue protein sequence, read N- to C-terminus: Putative membrane-bound redox modulator Alx (322 aa).

Over 1–6 (MNTVGT) the chain is Periplasmic. Residues 7–27 (PLLWGGFAVVVVIMLSIDLLL) traverse the membrane as a helical segment. Topologically, residues 28-43 (QGRRGAHAMSMKQAAG) are cytoplasmic. Residues 44 to 64 (WSILWVTLSLLFNAAFWWYLA) form a helical membrane-spanning segment. Residues 65–89 (ETQGREVADPQALAFLTGYLIEKSL) lie on the Periplasmic side of the membrane. The helical transmembrane segment at 90 to 110 (AVDNVFVWLMLFSYFSVPPAL) threads the bilayer. Topologically, residues 111–113 (QRR) are cytoplasmic. Residues 114–134 (VLVYGVLGAIVLRTIMIFAGT) form a helical membrane-spanning segment. A topological domain (periplasmic) is located at residue Trp135. The chain crosses the membrane as a helical span at residues 136–156 (LITQFEWLLYVFGAFLLFTGV). Residues 157-198 (KMALAKEDESGIGEKPMVRWLRGHLRMTDTIENEHFFVRKNG) are Cytoplasmic-facing. Residues 199–219 (LLYATPLLLVLIMVEFSDVIF) traverse the membrane as a helical segment. Residues 220 to 225 (AVDSIP) are Periplasmic-facing. A helical transmembrane segment spans residues 226–246 (AIFAVTTDPFIVLTSNLFAIL). Topologically, residues 247–261 (GLRAMYFLLSGVAER) are cytoplasmic. The chain crosses the membrane as a helical span at residues 262 to 282 (FSMLKYGLAVILVFIGIKMLI). Over 283–286 (VDFY) the chain is Periplasmic. The helical transmembrane segment at 287–307 (HIPIAISLGVVFGILTITLVI) threads the bilayer. Residues 308 to 321 (NTWVNHQRDKKLRA) are Cytoplasmic-facing.

Belongs to the TerC family.

Its subcellular location is the cell inner membrane. In terms of biological role, has been proposed to be a redox modulator. The chain is Putative membrane-bound redox modulator Alx (alx) from Salmonella typhi.